The following is a 255-amino-acid chain: Putative esterase YitV (255 aa).

The chain is Putative esterase YitV (yitV) from Bacillus subtilis (strain 168).